The following is a 674-amino-acid chain: tRNA 5-methylaminomethyl-2-thiouridine biosynthesis bifunctional protein MnmC (674 aa).

Positions 1-237 are tRNA (mnm(5)s(2)U34)-methyltransferase; it reads MLTSYQLESP…KREMTVGELN (237 aa). The tract at residues 270 to 674 is FAD-dependent cmnm(5)s(2)U34 oxidoreductase; sequence VGAGLAGANT…IRDLKRSQIL (405 aa).

In the N-terminal section; belongs to the methyltransferase superfamily. tRNA (mnm(5)s(2)U34)-methyltransferase family. The protein in the C-terminal section; belongs to the DAO family. Requires FAD as cofactor.

It is found in the cytoplasm. The enzyme catalyses 5-aminomethyl-2-thiouridine(34) in tRNA + S-adenosyl-L-methionine = 5-methylaminomethyl-2-thiouridine(34) in tRNA + S-adenosyl-L-homocysteine + H(+). Functionally, catalyzes the last two steps in the biosynthesis of 5-methylaminomethyl-2-thiouridine (mnm(5)s(2)U) at the wobble position (U34) in tRNA. Catalyzes the FAD-dependent demodification of cmnm(5)s(2)U34 to nm(5)s(2)U34, followed by the transfer of a methyl group from S-adenosyl-L-methionine to nm(5)s(2)U34, to form mnm(5)s(2)U34. The sequence is that of tRNA 5-methylaminomethyl-2-thiouridine biosynthesis bifunctional protein MnmC from Marinomonas sp. (strain MWYL1).